The sequence spans 176 residues: Putative Ras-related protein RABA4e (176 aa).

Belongs to the small GTPase superfamily. Rab family.

The sequence is that of Putative Ras-related protein RABA4e (RABA4E) from Arabidopsis thaliana (Mouse-ear cress).